Reading from the N-terminus, the 446-residue chain is Glutamyl-tRNA reductase (446 aa).

Substrate contacts are provided by residues 49–52, Ser-107, 112–114, and Gln-118; these read TCNR and EPQ. Cys-50 serves as the catalytic Nucleophile. 187-192 lines the NADP(+) pocket; it reads GAGETI. The interval 417–446 is disordered; the sequence is NANEDTRESVDKEQTGTTQGAARGDQRSTG. Over residues 420–430 the composition is skewed to basic and acidic residues; sequence EDTRESVDKEQ.

Belongs to the glutamyl-tRNA reductase family. In terms of assembly, homodimer.

It catalyses the reaction (S)-4-amino-5-oxopentanoate + tRNA(Glu) + NADP(+) = L-glutamyl-tRNA(Glu) + NADPH + H(+). The protein operates within porphyrin-containing compound metabolism; protoporphyrin-IX biosynthesis; 5-aminolevulinate from L-glutamyl-tRNA(Glu): step 1/2. In terms of biological role, catalyzes the NADPH-dependent reduction of glutamyl-tRNA(Glu) to glutamate 1-semialdehyde (GSA). This Alkalilimnicola ehrlichii (strain ATCC BAA-1101 / DSM 17681 / MLHE-1) protein is Glutamyl-tRNA reductase.